The primary structure comprises 296 residues: 4-hydroxy-tetrahydrodipicolinate synthase (296 aa).

T49 is a pyruvate binding site. Catalysis depends on Y137, which acts as the Proton donor/acceptor. K166 functions as the Schiff-base intermediate with substrate in the catalytic mechanism. I208 provides a ligand contact to pyruvate.

This sequence belongs to the DapA family. Homotetramer; dimer of dimers.

It is found in the cytoplasm. It catalyses the reaction L-aspartate 4-semialdehyde + pyruvate = (2S,4S)-4-hydroxy-2,3,4,5-tetrahydrodipicolinate + H2O + H(+). Its pathway is amino-acid biosynthesis; L-lysine biosynthesis via DAP pathway; (S)-tetrahydrodipicolinate from L-aspartate: step 3/4. Functionally, catalyzes the condensation of (S)-aspartate-beta-semialdehyde [(S)-ASA] and pyruvate to 4-hydroxy-tetrahydrodipicolinate (HTPA). This is 4-hydroxy-tetrahydrodipicolinate synthase from Chlorobium limicola (strain DSM 245 / NBRC 103803 / 6330).